Reading from the N-terminus, the 331-residue chain is Phosphate acyltransferase (331 aa).

The protein belongs to the PlsX family. In terms of assembly, homodimer. Probably interacts with PlsY.

The protein localises to the cytoplasm. The catalysed reaction is a fatty acyl-[ACP] + phosphate = an acyl phosphate + holo-[ACP]. Its pathway is lipid metabolism; phospholipid metabolism. Its function is as follows. Catalyzes the reversible formation of acyl-phosphate (acyl-PO(4)) from acyl-[acyl-carrier-protein] (acyl-ACP). This enzyme utilizes acyl-ACP as fatty acyl donor, but not acyl-CoA. The polypeptide is Phosphate acyltransferase (Wolinella succinogenes (strain ATCC 29543 / DSM 1740 / CCUG 13145 / JCM 31913 / LMG 7466 / NCTC 11488 / FDC 602W) (Vibrio succinogenes)).